Here is a 328-residue protein sequence, read N- to C-terminus: Peroxidase 25 (328 aa).

An N-terminal signal peptide occupies residues methionine 1–serine 26. 4 disulfide bridges follow: cysteine 38–cysteine 114, cysteine 71–cysteine 76, cysteine 120–cysteine 324, and cysteine 198–cysteine 230. The active-site Proton acceptor is histidine 69. Ca(2+) contacts are provided by aspartate 70, valine 73, glycine 75, aspartate 77, and serine 79. Proline 161 contributes to the substrate binding site. Residue histidine 191 participates in heme b binding. Threonine 192 lines the Ca(2+) pocket. Asparagine 207 carries N-linked (GlcNAc...) asparagine glycosylation. Positions 243, 246, and 251 each coordinate Ca(2+).

The protein belongs to the peroxidase family. Classical plant (class III) peroxidase subfamily. Heme b serves as cofactor. Requires Ca(2+) as cofactor.

Its subcellular location is the secreted. It carries out the reaction 2 a phenolic donor + H2O2 = 2 a phenolic radical donor + 2 H2O. Functionally, removal of H(2)O(2), oxidation of toxic reductants, biosynthesis and degradation of lignin, suberization, auxin catabolism, response to environmental stresses such as wounding, pathogen attack and oxidative stress. These functions might be dependent on each isozyme/isoform in each plant tissue. This chain is Peroxidase 25 (PER25), found in Arabidopsis thaliana (Mouse-ear cress).